The primary structure comprises 278 residues: Rhomboid protease GlpG (278 aa).

The next 6 membrane-spanning stretches (helical) occupy residues 95 to 115 (GPLTLSVMVLCIAIYILMQIV), 143 to 163 (AFLHFSLLHILFNLMWWWYLA), 170 to 190 (LGTGKLLVLTIVSALFSGWGQ), 192 to 212 (LFSGVNFGGLSGVVYALMGYV), 224 to 241 (ISLPRGLMAFSVLWLVAG), and 245 to 267 (ILGLSIANAAHVSGLIIGLLMAF). Serine 202 serves as the catalytic Nucleophile. Histidine 255 is a catalytic residue.

It belongs to the peptidase S54 family.

The protein localises to the cell inner membrane. It catalyses the reaction Cleaves type-1 transmembrane domains using a catalytic dyad composed of serine and histidine that are contributed by different transmembrane domains.. Its function is as follows. Rhomboid-type serine protease that catalyzes intramembrane proteolysis. The sequence is that of Rhomboid protease GlpG from Yersinia enterocolitica serotype O:8 / biotype 1B (strain NCTC 13174 / 8081).